A 215-amino-acid chain; its full sequence is Large ribosomal subunit protein uL4 (215 aa).

The disordered stretch occupies residues 46-72 (TAKSKNRAEVSGGGRKPWAQKGGGRAR). Residues 56 to 71 (SGGGRKPWAQKGGGRA) show a composition bias toward gly residues.

This sequence belongs to the universal ribosomal protein uL4 family. As to quaternary structure, part of the 50S ribosomal subunit.

Functionally, one of the primary rRNA binding proteins, this protein initially binds near the 5'-end of the 23S rRNA. It is important during the early stages of 50S assembly. It makes multiple contacts with different domains of the 23S rRNA in the assembled 50S subunit and ribosome. In terms of biological role, forms part of the polypeptide exit tunnel. The sequence is that of Large ribosomal subunit protein uL4 from Helicobacter pylori (strain Shi470).